The primary structure comprises 384 residues: Carbamoyl phosphate synthase small chain (384 aa).

The segment at 1–195 is CPSase; that stretch reads MLPVLPPALL…LGRGHGTLAD (195 aa). 3 residues coordinate L-glutamine: S50, G247, and G249. One can recognise a Glutamine amidotransferase type-1 domain in the interval 199 to 384; the sequence is HVVAYDFGVK…RFVALMQERA (186 aa). The Nucleophile role is filled by C275. L-glutamine is bound by residues L276, Q279, N317, G319, and F320. Active-site residues include H359 and E361.

The protein belongs to the CarA family. Composed of two chains; the small (or glutamine) chain promotes the hydrolysis of glutamine to ammonia, which is used by the large (or ammonia) chain to synthesize carbamoyl phosphate. Tetramer of heterodimers (alpha,beta)4.

It carries out the reaction hydrogencarbonate + L-glutamine + 2 ATP + H2O = carbamoyl phosphate + L-glutamate + 2 ADP + phosphate + 2 H(+). It catalyses the reaction L-glutamine + H2O = L-glutamate + NH4(+). The protein operates within amino-acid biosynthesis; L-arginine biosynthesis; carbamoyl phosphate from bicarbonate: step 1/1. It participates in pyrimidine metabolism; UMP biosynthesis via de novo pathway; (S)-dihydroorotate from bicarbonate: step 1/3. Its function is as follows. Small subunit of the glutamine-dependent carbamoyl phosphate synthetase (CPSase). CPSase catalyzes the formation of carbamoyl phosphate from the ammonia moiety of glutamine, carbonate, and phosphate donated by ATP, constituting the first step of 2 biosynthetic pathways, one leading to arginine and/or urea and the other to pyrimidine nucleotides. The small subunit (glutamine amidotransferase) binds and cleaves glutamine to supply the large subunit with the substrate ammonia. This Rubrivivax gelatinosus (strain NBRC 100245 / IL144) protein is Carbamoyl phosphate synthase small chain.